Consider the following 246-residue polypeptide: Ly6/PLAUR domain-containing protein 4 (246 aa).

The signal sequence occupies residues 1–26; it reads MILQAWRSLQLLYLLEAISLLPCTEA. A glycan (N-linked (GlcNAc...) asparagine) is linked at N117. Positions 142–223 constitute a UPAR/Ly6 domain; sequence CPSCVGKHDQ…INVLDKSEAV (82 aa). The GPI-anchor amidated alanine moiety is linked to residue A225. Positions 226-246 are cleaved as a propeptide — removed in mature form; that stretch reads GHCSQGISWSVLLCLLILLRD.

The protein localises to the cell membrane. The chain is Ly6/PLAUR domain-containing protein 4 (Lypd4) from Mus musculus (Mouse).